The following is a 328-amino-acid chain: L-asparaginase (328 aa).

One can recognise an Asparaginase/glutaminase domain in the interval 1–320 (MKLLVLGTGG…EEIRKIMERN (320 aa)). The Nucleophile; O-isoaspartyl threonine intermediate role is filled by T11. 5 residues coordinate L-aspartate: T11, D53, S54, T85, and D86. Catalysis depends on charge relay system residues T85, D86, K156, and Y274.

Belongs to the asparaginase 1 family. In terms of assembly, homodimer.

The enzyme catalyses L-asparagine + H2O = L-aspartate + NH4(+). With respect to regulation, chohan et al. found that divalent metal ions and EDTA do not have any significant effect on enzyme activity, indicating that activity is independent of metal ions. In another study, Hong et al. showed that activity is enhanced by Mg(2+), significantly inhibited by Co(2+) and Ni(2+), and moderately inhibited by Ca(2+), Cu(2+) and EDTA. Unfolding studies suggest that urea cannot induce complete unfolding and inactivation of the enzyme even at a concentration 8 M. However, in the presence of 4 M guanidine hydrochloride, the enzyme structure is unfolded with complete loss of enzyme activity. Functionally, catalyzes the hydrolysis of L-asparagine into L-aspartate and ammonia. Also displays D-asparaginase activity, which is about 50% of the L-asparaginase activity. Does not exhibit glutaminase activity. The chain is L-asparaginase from Thermococcus kodakarensis (strain ATCC BAA-918 / JCM 12380 / KOD1) (Pyrococcus kodakaraensis (strain KOD1)).